The primary structure comprises 107 residues: Phosphoribosyl-ATP pyrophosphatase (107 aa).

Belongs to the PRA-PH family.

The protein resides in the cytoplasm. The enzyme catalyses 1-(5-phospho-beta-D-ribosyl)-ATP + H2O = 1-(5-phospho-beta-D-ribosyl)-5'-AMP + diphosphate + H(+). It functions in the pathway amino-acid biosynthesis; L-histidine biosynthesis; L-histidine from 5-phospho-alpha-D-ribose 1-diphosphate: step 2/9. The protein is Phosphoribosyl-ATP pyrophosphatase (hisE) of Neisseria meningitidis serogroup A / serotype 4A (strain DSM 15465 / Z2491).